The following is a 250-amino-acid chain: 1-(5-phosphoribosyl)-5-[(5-phosphoribosylamino)methylideneamino] imidazole-4-carboxamide isomerase (250 aa).

Aspartate 12 (proton acceptor) is an active-site residue. Catalysis depends on aspartate 134, which acts as the Proton donor.

Belongs to the HisA/HisF family.

The protein localises to the cytoplasm. It carries out the reaction 1-(5-phospho-beta-D-ribosyl)-5-[(5-phospho-beta-D-ribosylamino)methylideneamino]imidazole-4-carboxamide = 5-[(5-phospho-1-deoxy-D-ribulos-1-ylimino)methylamino]-1-(5-phospho-beta-D-ribosyl)imidazole-4-carboxamide. Its pathway is amino-acid biosynthesis; L-histidine biosynthesis; L-histidine from 5-phospho-alpha-D-ribose 1-diphosphate: step 4/9. The chain is 1-(5-phosphoribosyl)-5-[(5-phosphoribosylamino)methylideneamino] imidazole-4-carboxamide isomerase from Actinobacillus pleuropneumoniae serotype 5b (strain L20).